We begin with the raw amino-acid sequence, 669 residues long: MMPSPSDSSRSLTSRPSTRGLTHLRLHRPWLQALLTLGLAQVLLGILVITFSMVASSVTTTESIKRSCPSWAGFSLAFSGLVGIVSWKRPFTLVISFFSLLSVLCVMLSMAGSVLSCKNAQLARDFRECSMEGKVCVCCPPIPLHRPCPEWGQELKVALNSTCDEARGALKNLLFSVCGLTICAAIICTLSAIVCCVQIFSLDLVHMQLAPERSVSGPLGPLACTSSPPAPLLHTMLDLEEFVPPVPPPPYYPPEYTCSSETDAQSITYNGSMDSPVPLYPTDCPPSYEAVMGLRRDSQATLFDPQLHDGSCVCERVASIVDVSMDSGSLVLSAIGDLPGGSSPSEDSCLLELQGSVRSVDYVLFRSIQRSRAGYCLSLDCGLRGPFEDSPLPRRPPRAARSYSCSAPEAPPPLGAPTAARSCHRLEGWPPWVGPCFPELRRRVPRGGSRSAAPPPARAPARRFSDSSGSLTPPGHRPPHRTPPPPLLLPRSHSDPGITTSSDIADFRDLYTKVLEEEAASVSSADTGLCSEACLFRLARCPSPKLLRARSAEKRRPVPTFQKVPLPSGPTPAHSLGDLKGSWPGRGLVTRFLQLSRRSPDPTGTGAHGYKQVRRSPWGRPGRESLHLRSCGDLSSGSSLRRLLSARRLEHGIRPHSLSLNGGSRETGL.

3 consecutive transmembrane segments (helical) span residues 34 to 54, 67 to 87, and 91 to 111; these read LLTL…FSMV, SCPS…IVSW, and FTLV…LSMA. N-linked (GlcNAc...) asparagine glycosylation occurs at Asn-160. A helical membrane pass occupies residues 174–194; the sequence is LFSVCGLTICAAIICTLSAIV. 2 positions are modified to phosphoserine: Ser-359 and Ser-390. Disordered regions lie at residues 387-420, 445-502, and 550-571; these read FEDS…PTAA, PRGG…TTSS, and RSAE…SGPT. Positions 399-408 are enriched in low complexity; sequence AARSYSCSAP. Ser-494 carries the post-translational modification Phosphoserine. Ser-575 is subject to Phosphoserine. A disordered region spans residues 597–624; it reads RRSPDPTGTGAHGYKQVRRSPWGRPGRE.

Belongs to the ENTREP family. As to quaternary structure, may interact with WWOX.

It is found in the membrane. The protein is Protein ENTREP3 of Mus musculus (Mouse).